Reading from the N-terminus, the 484-residue chain is Falcipain-2a (484 aa).

Topologically, residues 1-35 (MDYNMDYAPHEVISQQGERFVDKYVDRKILKNKKS) are cytoplasmic. Positions 1–243 (MDYNMDYAPH…PLKNSKYLLD (243 aa)) are cleaved as a propeptide — activation peptide. The Bipartite vacuolar targeting signal 1 motif lies at 16–25 (QGERFVDKYV). A helical; Signal-anchor for type II membrane protein transmembrane segment spans residues 36–56 (LLVIISLSVLSVVGFVLFYFT). Residues 57-484 (PNSRKSDLFK…GTDAFIPLIE (428 aa)) lie on the Lumenal side of the membrane. An N-linked (GlcNAc...) asparagine glycan is attached at Asn67. Positions 84-105 (KSPNGKKFIVSKIDEALSFYDS) match the Bipartite vacuolar targeting signal 2 motif. The short motif at 244–260 (QMNYEEVIKKYKGNENF) is the Nose motif; required for the correct folding of the mature form element. 4 disulfides stabilise this stretch: Cys282/Cys323, Cys316/Cys357, Cys342/Cys362, and Cys411/Cys472. Residue Cys285 is part of the active site. His417 is a catalytic residue. An Arm motif; binds to host hemoglobin and required for the inhibitory interaction between the propeptide and the catalytic domain motif is present at residues 428–437 (EIVNPLTKKG). The active site involves Asn447.

The protein belongs to the peptidase C1 family. In terms of assembly, component of the hemozoin formation complex (HFC) composed of falcipains FP2A and/or FP2B, plasmepsins PMII, PMIII/HAP and PMIV, heme detoxifying protein HDP and falcilysin FLN. The HFC complex is involved in hemoglobin degradation and detoxification of heme in the food vacuole during the asexual blood stage. Auto-cleaved to remove the propeptide.

The protein resides in the vacuole. The protein localises to the membrane. Inhibited by cysteine protease inhibitor ICP. Inhibited by heme and heme analogs. Its function is as follows. Cysteine protease which cleaves native host hemoglobin and globin in the food vacuole during the asexual blood stage. The binding to host hemoglobin is pH-sensitive and only occurs at acidic pH. Cleaves ankyrin and protein 4.1, two components of host erythrocyte membrane cytoskeleton required for the stability of the erythrocyte membrane, and thus may be involved in parasite release. Preferentially cleaves substrates which have an arginine or lysine at the P1 position and a leucine or phenylalanine at the P2 position. The protein is Falcipain-2a of Plasmodium falciparum (isolate 3D7).